Here is a 1436-residue protein sequence, read N- to C-terminus: MLHLSAAPPAPPPEVTATARPCLCSVGRRGDGGKMAAAGALERSFVELSGAERERPRHFREFTVCSIGTANAVAGAVKYSESAGGFYYVESGKLFSVTRNRFIHWKTSGDTLELMEESLDINLLNNAIRLKFQNCSVLPGGVYVSETQNRVIILMLTNQTVHRLLLPHPSRMYRSELVVDSQMQSIFTDIGKVDFTDPCNYQLIPAVPGISPNSTASTAWLSSDGEALFALPCASGGIFVLKLPPYDIPGMVSVVELKQSSVMQRLLTGWMPTAIRGDQSPSDRPLSLAVHCVEHDAFIFALCQDHKLRMWSYKEQMCLMVADMLEYVPVKKDLRLTAGTGHKLRLAYSPTMGLYLGIYMHAPKRGQFCIFQLVSTESNRYSLDHISSLFTSQETLIDFALTSTDIWALWHDAENQTVVKYINFEHNVAGQWNPVFMQPLPEEEIVIRDDQDPREMYLQSLFTPGQFTNEALCKALQIFCRGTERNLDLSWSELKKEVTLAVENELQGSVTEYEFSQEEFRNLQQEFWCKFYACCLQYQEALSHPLALHLNPHTNMVCLLKKGYLSFLIPSSLVDHLYLLPYENLLTEDETTISDDVDIARDVICLIKCLRLIEESVTVDMSVIMEMSCYNLQSPEKAAEQILEDMITIDVENVMEDICSKLQEIRNPIHAIGLLIREMDYETEVEMEKGFNPAQPLNIRMNLTQLYGSNTAGYIVCRGVHKIASTRFLICRDLLILQQLLMRLGDAVIWGTGQLFQAQQDLLHRTAPLLLSYYLIKWGSECLATDVPLDTLESNLQHLSVLELTDSGALMANRFVSSPQTIVELFFQEVARKHIISHLFSQPKAPLSQTGLNWPEMITAITSYLLQLLWPSNPGCLFLECLMGNCQYVQLQDYIQLLHPWCQVNVGSCRFMLGRCYLVTGEGQKALECFCQAASEVGKEEFLDRLIRSEDGEIVSTPRLQYYDKVLRLLDVIGLPELVIQLATSAITEAGDDWKSQATLRTCIFKHHLDLGHNSQAYEALTQIPDSSRQLDCLRQLVVVLCERSQLQDLVEFPYVNLHNEVVGIIESRARAVDLMTHNYYELLYAFHIYRHNYRKAGTVMFEYGMRLGREVRTLRGLEKQGNCYLAALNCLRLIRPEYAWIVQPVSGAVYDRPGASPKRNHDGECTAAPTNRQIEILELEDLEKECSLARIRLTLAQHDPSAVAVAGSSSAEEMVTLLVQAGLFDTAISLCQTFKLPLTPVFEGLAFKCIKLQFGGEAAQAEAWAWLAANQLSSVITTKESSATDEAWRLLSTYLERYKVQNNLYHHCVINKLLSHGVPLPNWLINSYKKVDAAELLRLYLNYDLLEEAVDLVSEYVDAVLGKGHQYFGIEFPLSATAPMVWLPYSSIDQLLQALGENSANSHNIALSQKILDKLEDYQQKVDKATRDLLYRRTL.

Residues serine 44, serine 490, serine 949, and serine 1157 each carry the phosphoserine modification.

As to quaternary structure, part of the nuclear pore complex (NPC). Forms part of the NUP160 subcomplex in the nuclear pore which is composed of NUP160, NUP133, NUP107 and NUP96. This complex plays a role in RNA export and in tethering NUP98 and NUP153 to the nucleus.

It localises to the nucleus. It is found in the nuclear pore complex. Functionally, functions as a component of the nuclear pore complex (NPC). Involved in poly(A)+ RNA transport. This Homo sapiens (Human) protein is Nuclear pore complex protein Nup160 (NUP160).